Consider the following 157-residue polypeptide: 3-hydroxyacyl-[acyl-carrier-protein] dehydratase FabZ (157 aa).

Residue His58 is part of the active site.

The protein belongs to the thioester dehydratase family. FabZ subfamily.

The protein localises to the cytoplasm. The catalysed reaction is a (3R)-hydroxyacyl-[ACP] = a (2E)-enoyl-[ACP] + H2O. Functionally, involved in unsaturated fatty acids biosynthesis. Catalyzes the dehydration of short chain beta-hydroxyacyl-ACPs and long chain saturated and unsaturated beta-hydroxyacyl-ACPs. The sequence is that of 3-hydroxyacyl-[acyl-carrier-protein] dehydratase FabZ from Brucella abortus biovar 1 (strain 9-941).